Here is a 511-residue protein sequence, read N- to C-terminus: UDP-N-acetylmuramoyl-L-alanyl-D-glutamate--2,6-diaminopimelate ligase (511 aa).

Ser-30 is a binding site for UDP-N-acetyl-alpha-D-muramoyl-L-alanyl-D-glutamate. Residue 110–116 (GTNGKTT) coordinates ATP. UDP-N-acetyl-alpha-D-muramoyl-L-alanyl-D-glutamate is bound by residues 152–153 (TT), Ser-179, Gln-185, and Arg-187. Lys-219 carries the post-translational modification N6-carboxylysine. Meso-2,6-diaminopimelate is bound by residues Arg-385, 409 to 412 (DNPR), Gly-476, and Glu-480. The short motif at 409 to 412 (DNPR) is the Meso-diaminopimelate recognition motif element.

The protein belongs to the MurCDEF family. MurE subfamily. It depends on Mg(2+) as a cofactor. In terms of processing, carboxylation is probably crucial for Mg(2+) binding and, consequently, for the gamma-phosphate positioning of ATP.

The protein resides in the cytoplasm. It catalyses the reaction UDP-N-acetyl-alpha-D-muramoyl-L-alanyl-D-glutamate + meso-2,6-diaminopimelate + ATP = UDP-N-acetyl-alpha-D-muramoyl-L-alanyl-gamma-D-glutamyl-meso-2,6-diaminopimelate + ADP + phosphate + H(+). Its pathway is cell wall biogenesis; peptidoglycan biosynthesis. Its function is as follows. Catalyzes the addition of meso-diaminopimelic acid to the nucleotide precursor UDP-N-acetylmuramoyl-L-alanyl-D-glutamate (UMAG) in the biosynthesis of bacterial cell-wall peptidoglycan. The polypeptide is UDP-N-acetylmuramoyl-L-alanyl-D-glutamate--2,6-diaminopimelate ligase (Geobacter metallireducens (strain ATCC 53774 / DSM 7210 / GS-15)).